The chain runs to 281 residues: DegV domain-containing protein spr0652 (281 aa).

The DegV domain occupies 3 to 280; the sequence is WKIIADSGCD…EGGLLMGYEI (278 aa). Hexadecanoate contacts are provided by S63 and S91.

Its function is as follows. May bind long-chain fatty acids, such as palmitate, and may play a role in lipid transport or fatty acid metabolism. In Streptococcus pneumoniae (strain ATCC BAA-255 / R6), this protein is DegV domain-containing protein spr0652.